The sequence spans 521 residues: uncharacterized protein (521 aa).

10 helical membrane passes run 103–123 (NLML…VPMP), 136–156 (FWFF…LWIT), 177–197 (YILF…FTAW), 200–220 (ITFT…GISF), 259–279 (AYAH…VYIV), 299–319 (IMYV…SSWI), 327–346 (YALV…VYVR), 358–378 (FVLV…LITM), 411–431 (CVAS…LHFG), and 450–470 (FKLT…ASYL).

It localises to the membrane. This is an uncharacterized protein from Schizosaccharomyces pombe (strain 972 / ATCC 24843) (Fission yeast).